The following is a 612-amino-acid chain: Protein MUK1 (612 aa).

The span at 40–50 shows a compositional bias: basic and acidic residues; that stretch reads EDQNDNERSSC. Residues 40 to 66 form a disordered region; it reads EDQNDNERSSCDGDENSTTGERLENNK. Residues 55–66 are compositionally biased toward polar residues; the sequence is NSTTGERLENNK. Ser67, Ser163, Ser185, and Ser245 each carry phosphoserine. Residues 273-414 enclose the VPS9 domain; it reads TEYNKLLNEK…VEGLTKNDFS (142 aa). The tract at residues 494-560 is disordered; sequence IRSYTPPHPN…SSASLEHGNR (67 aa). Low complexity predominate over residues 503–517; the sequence is NNTSNNNLHSSNNLN. Positions 518 to 529 are enriched in polar residues; it reads IPRSSSQLSMEL. Positions 530–542 are enriched in basic and acidic residues; it reads SNRDTTEMSRDGS. Positions 543–554 are enriched in low complexity; that stretch reads RSTSSSSRSSAS.

Its subcellular location is the cytoplasm. Functionally, putative GTPase-activating protein. This Saccharomyces cerevisiae (strain ATCC 204508 / S288c) (Baker's yeast) protein is Protein MUK1 (MUK1).